The sequence spans 35 residues: Photosystem II reaction center protein T (35 aa).

Residues 3-23 traverse the membrane as a helical segment; sequence ALVYTFLLVSTLGIIFFAIFF.

This sequence belongs to the PsbT family. In terms of assembly, PSII is composed of 1 copy each of membrane proteins PsbA, PsbB, PsbC, PsbD, PsbE, PsbF, PsbH, PsbI, PsbJ, PsbK, PsbL, PsbM, PsbT, PsbY, PsbZ, Psb30/Ycf12, at least 3 peripheral proteins of the oxygen-evolving complex and a large number of cofactors. It forms dimeric complexes.

The protein resides in the plastid. It localises to the chloroplast thylakoid membrane. In terms of biological role, found at the monomer-monomer interface of the photosystem II (PS II) dimer, plays a role in assembly and dimerization of PSII. PSII is a light-driven water plastoquinone oxidoreductase, using light energy to abstract electrons from H(2)O, generating a proton gradient subsequently used for ATP formation. The polypeptide is Photosystem II reaction center protein T (Drimys granadensis).